A 219-amino-acid polypeptide reads, in one-letter code: C-type lectin domain family 4 member E (219 aa).

Topologically, residues 1-19 (MNSSKSSETQCTERGCFSS) are cytoplasmic. The helical; Signal-anchor for type II membrane protein transmembrane segment at 20 to 40 (QMFLWTVAGIPILFLSACFIT) threads the bilayer. At 41 to 219 (RCVVTFRIFQ…INPLNKGKSL (179 aa)) the chain is on the extracellular side. N62 is a glycosylation site (N-linked (GlcNAc...) asparagine). C80 and C91 are joined by a disulfide. A C-type lectin domain is found at 87–206 (FQSSCYFFST…CFLNYFRICE (120 aa)). An N-linked (GlcNAc...) asparagine glycan is attached at N107. 2 disulfides stabilise this stretch: C108-C205 and C179-C197. Residues V117, N119, E123, E169, N171, N193, D194, and E206 each contribute to the Ca(2+) site. A Confers specificity for glucose/mannose-type carbohydrates motif is present at residues 169-171 (EPN).

As to quaternary structure, monomer and homodimer. Interacts with signaling adapter Fc receptor gamma chain/FCER1G to form a functional complex; the interaction is direct. Alternatively, acts as a bridge for interaction between CLEC4D and FCER1G. A heterodimer of CLEC4E and CLEC4D associates with FCER1G to form a functional complex. Interacts with SAP130 nuclear protein that is released from necrotic cells; the interaction is direct. In terms of tissue distribution, expressed in monocytes and macrophages.

The protein resides in the cell membrane. Its subcellular location is the cell projection. The protein localises to the phagocytic cup. Calcium-dependent lectin that acts as a pattern recognition receptor (PRR) of the innate immune system: recognizes damage-associated molecular patterns (DAMPs) of abnormal self and pathogen-associated molecular patterns (PAMPs) of bacteria and fungi. The PAMPs notably include mycobacterial trehalose 6,6'-dimycolate (TDM), a cell wall glycolipid with potent adjuvant immunomodulatory functions. Interacts with signaling adapter Fc receptor gamma chain/FCER1G to form a functional complex in myeloid cells. Binding of mycobacterial trehalose 6,6'-dimycolate (TDM) to this receptor complex leads to phosphorylation of the immunoreceptor tyrosine-based activation motif (ITAM) of FCER1G, triggering activation of SYK, CARD9 and NF-kappa-B, consequently driving maturation of antigen-presenting cells and shaping antigen-specific priming of T-cells toward effector T-helper 1 and T-helper 17 cell subtypes. Also recognizes alpha-mannose residues on pathogenic fungi of the genus Malassezia and mediates macrophage activation. Through recognition of DAMPs released upon nonhomeostatic cell death, enables immune sensing of damaged self and promotes inflammatory cell infiltration into the damaged tissue. This is C-type lectin domain family 4 member E from Homo sapiens (Human).